The following is a 1520-amino-acid chain: Accessory colonization factor AcfD (1520 aa).

The first 16 residues, 1 to 16, serve as a signal peptide directing secretion; that stretch reads MKIRIVSLIVLGFLIG. Cys-17 is lipidated: N-palmitoyl cysteine. Cys-17 carries S-diacylglycerol cysteine lipidation. A Peptidase M60 domain is found at 1085–1388; sequence GNRQPTGQWA…MFAQLKEWAE (304 aa).

It localises to the cell membrane. This Vibrio cholerae serotype O1 (strain ATCC 39315 / El Tor Inaba N16961) protein is Accessory colonization factor AcfD (acfD).